The primary structure comprises 728 residues: Plakophilin-1 (728 aa).

The required for binding to single stranded DNA stretch occupies residues 1 to 235 (MNHSPLKTAL…SFGHSRASSK (235 aa)). The required for interaction with EIF4A1 stretch occupies residues 1–287 (MNHSPLKTAL…ESAKQQVYQL (287 aa)). At Ser4 the chain carries Phosphoserine; by RIPK4. Positions 48–69 (TVKRQKSKSSQSSTLSHSNRGS) are disordered. 2 phosphorylation in this region is required for cytoplasmic localization and protein stabilization regions span residues 54-69 (SKSSQSSTLSHSNRGS) and 117-192 (RFSS…STCS). A Phosphoserine modification is found at Ser119. Position 120 is a phosphoserine; by RIPK4 (Ser120). Residue Ser122 is modified to Phosphoserine. Ser143 carries the phosphoserine; by RIPK4 modification. Residues 161-270 (YCDPRGTLRK…KYQAIGAYYI (110 aa)) form a required for WNT-mediated nuclear localization region. 9 ARM repeats span residues 244–275 (SGLTIPKAVQYLCSQDEKYQAIGAYYIQHTCF), 276–317 (QDES…NLVF), 318–360 (RSTP…NLSS), 361–412 (TDEL…GCLR), 413–443 (NLSSADAGRQTMRNYSGLIDSLMAYVQNCVA), 505–536 (NYDCPLPEEETNPKGSSWLYHSDAIRTYLNLM), 537–583 (GKSK…IARL), 584–629 (LQSG…SHTG), and 630–694 (NTSN…DMWA).

This sequence belongs to the beta-catenin family. In terms of assembly, part of a complex that contains DSG3, PKP1, YAP1 and YWHAG; the complex is required for localization of DSG3 and YAP1 to the cell membrane in keratinocytes. Interacts (via N-terminus) with KRT5/CK5, KRT8/CK8 (via rod domain), KRT15/CK15 and KRT18/CK18 (via rod domain) as part of intermediate filaments. Interacts with VIM (via rod domain). Interacts with DSP. Interacts with DES. Interacts with FXR1; the interaction may facilitate the binding of PKP1 to PKP2, PKP3 and DSP mRNA. Interacts (via N-terminus) with EIF4A1; the interaction promotes EIF4A1 recruitment to the cap-dependent translation complex and EIF4A1 ATPase activity. Interacts with TJP1/ZO-1; the interaction facilitates TJP1/ZO-1 localization to the plasma membrane. Interacts (when phosphorylated) with YWHAG; the interaction results in translocation of PKP1 to the cytoplasm and loss of intercellular adhesion in keratinocytes. Phosphorylated by AKT2; required for interaction with YWHAG and subsequent localization away from desmosomes to the cytoplasm. Phosphorylation of Ser-119 by AKT2 promotes PKP1-driven cap-dependent mRNA translation and decreases intercellular adhesion, phosphorylation is promoted by insulin. Phosphorylation by RIPK4 at the N-terminus is required for its role in differentiation of keratinocytes and DSG1 localization at cell junctions. As to expression, expressed in undifferentiated keratinocytes of the epidermis at birth, expression increases as differentiation proceeds (at protein level). Expressed in the cervical loop during early tooth differentiation, expression is then present between ameloblasts, at ameloblast-ameloblast junctions and in the stratum intermedium during pre-secretory and secretory stages of tooth development (at protein level).

Its subcellular location is the nucleus. It is found in the cytoplasm. The protein localises to the perinuclear region. The protein resides in the cell junction. It localises to the desmosome. Its subcellular location is the cell membrane. It is found in the stress granule. A component of desmosome cell-cell junctions which are required for positive regulation of cellular adhesion. Plays a role in desmosome protein expression regulation and localization to the desmosomal plaque, thereby maintaining cell sheet integrity and anchorage of desmosomes to intermediate filaments. Required for localization of DSG3 and YAP1 to the cell membrane in keratinocytes in response to mechanical strain, via the formation of an interaction complex composed of DSG3, YAP1, PKP1 and YWHAG. Positively regulates differentiation of keratinocytes, potentially via promoting localization of DSG1 at desmosome cell junctions. Required for calcium-independent development and maturation of desmosome plaques specifically at lateral cell-cell contacts in differentiating keratinocytes. Plays a role in the maintenance of DSG3 protein abundance, DSG3 clustering and localization of these clusters to the cell membrane in keratinocytes. May also promote keratinocyte proliferation and morphogenesis during postnatal development. Required for tight junction inside-out transepidermal barrier function of the skin, and is thereby involved in neonatal survival possibly via maintenance of hydration levels. Promotes Wnt-mediated proliferation and differentiation of ameloblasts, via facilitating TJP1/ZO-1 localization to tight junctions. Binds single-stranded DNA (ssDNA), and may thereby play a role in sensing DNA damage and promoting cell survival. Positively regulates cap-dependent translation and as a result cell proliferation, via recruitment of EIF4A1 to the initiation complex and promotion of EIF4A1 ATPase activity. Regulates the mRNA stability and protein abundance of desmosome components PKP2, PKP3, DSC2 and DSP, potentially via its interaction with FXR1. The protein is Plakophilin-1 (Pkp1) of Mus musculus (Mouse).